The primary structure comprises 747 residues: Phenylalanine ammonia-lyase 2 (747 aa).

The span at 1 to 20 (MTILSGTTAAPRVNGTTMNG) shows a compositional bias: polar residues. The interval 1-47 (MTILSGTTAAPRVNGTTMNGHSKPHTNGVHLNGHAPKATTESPWPQS) is disordered. Y124 serves as the catalytic Proton donor/acceptor. The 5-imidazolinone (Ala-Gly) cross-link spans 229–231 (ASG). Position 230 is a 2,3-didehydroalanine (Ser) (S230). 7 residues coordinate (E)-cinnamate: N290, Q380, R386, N416, K487, E515, and N518.

The protein belongs to the PAL/histidase family. As to quaternary structure, homotetramer. Contains an active site 4-methylidene-imidazol-5-one (MIO), which is formed autocatalytically by cyclization and dehydration of residues Ala-Ser-Gly.

The protein resides in the cytoplasm. It catalyses the reaction L-phenylalanine = (E)-cinnamate + NH4(+). It functions in the pathway phenylpropanoid metabolism; trans-cinnamate biosynthesis; trans-cinnamate from L-phenylalanine: step 1/1. Its function is as follows. Catalyzes the non-oxidative deamination of L-phenylalanine to form trans-cinnamic acid and a free ammonium ion. Facilitates the commitment step in phenylpropanoid pathways that produce secondary metabolites such as lignins, coumarins and flavonoids. In Pleurotus ostreatus (Oyster mushroom), this protein is Phenylalanine ammonia-lyase 2.